Reading from the N-terminus, the 269-residue chain is Type II iodothyronine deiodinase (269 aa).

Residues 1–9 are Lumenal-facing; that stretch reads MGILSVDLL. Residues 10-34 traverse the membrane as a helical; Signal-anchor for type III membrane protein segment; the sequence is ITLQILPVFFSNCLFLALYDSVILL. Residues 35-269 lie on the Cytoplasmic side of the membrane; it reads KHVVLLLSRS…KNFSKRUKKT (235 aa). Residue Sec133 is part of the active site. 2 non-standard amino acids (selenocysteine) are found at residues Sec133 and Sec266.

This sequence belongs to the iodothyronine deiodinase family. Predominantly monomer. Can form homodimers but homodimerization is not essential for enzyme activity. Interacts with USP20 and USP33. Interacts with MARCHF6. In terms of processing, ubiquitinated by MARCHF6, leading to its degradation by the proteasome. Deubiquitinated by USP20 and USP33. More expressed in pituitary than in brain, low to undetectable levels in thyroid and skeletal muscle.

It localises to the endoplasmic reticulum membrane. The enzyme catalyses 3,3',5-triiodo-L-thyronine + iodide + A + H(+) = L-thyroxine + AH2. It carries out the reaction 3,3'-diiodo-L-thyronine + iodide + A + H(+) = 3,3',5'-triiodo-L-thyronine + AH2. It catalyses the reaction 3'-iodo-L-thyronine + iodide + A + H(+) = 3',5'-diiodo-L-thyronine + AH2. The catalysed reaction is 3,3'-diiodothyronamine + iodide + A + H(+) = 3,3',5'-triiodothyronamine + AH2. The enzyme catalyses 3'-iodothyronamine + iodide + A + H(+) = 3',5'-diiodothyronamine + AH2. In terms of biological role, plays a crucial role in the metabolism of thyroid hormones (TH) and has specific roles in TH activation and inactivation by deiodination.Catalyzes the deiodination of L-thyroxine (T4) to 3,5,3'-triiodothyronine (T3) and 3,3',5'-triiodothyronine (rT3) to 3,3'-diiodothyronine (3,3'-T2) via outer-ring deiodination (ORD). Catalyzes the deiodination of 3',5'-diiodothyronine (3',5'-T2) to 3'-monoiodothyronine (3'-T1) via ORD. Catalyzes the phenolic ring deiodinations of 3,3',5'-triiodothyronamine and 3',5'- diiodothyronamine. In Sus scrofa (Pig), this protein is Type II iodothyronine deiodinase (DIO2).